Consider the following 415-residue polypeptide: Putative F-box protein At5g40050 (415 aa).

In terms of domain architecture, F-box spans 13-59; it reads IDSISPLPDELLSHILSFLPTKRAASTSILSKRWRTLFPLMNHLCAS.

The polypeptide is Putative F-box protein At5g40050 (Arabidopsis thaliana (Mouse-ear cress)).